We begin with the raw amino-acid sequence, 463 residues long: Quinolone resistance protein NorB (463 aa).

Helical transmembrane passes span 19–39, 53–73, 86–106, 107–127, 142–162, 165–185, 201–221, 230–250, 273–293, 299–319, 334–354, 357–377, 403–423, and 435–455; these read IVLS…VVLI, IAVS…GGLA, IILN…LLLI, IGRL…LSII, YWSI…GAVA, LGWR…LFLI, FDIK…ILIT, SLLF…FIVL, TASN…NTFV, YSLL…LIMI, PMLI…LTFL, ILYV…LGIY, MASA…YAIV, and IALW…LLLV.

It belongs to the major facilitator superfamily. TCR/Tet family.

It localises to the cell membrane. Functionally, multidrug efflux pump that acts independently of NorA and is one of the factors that confers resistance against diverse quinolones and chemical compounds. The sequence is that of Quinolone resistance protein NorB (norB) from Staphylococcus aureus (strain bovine RF122 / ET3-1).